A 181-amino-acid chain; its full sequence is Ribosome maturation factor RimM (181 aa).

One can recognise a PRC barrel domain in the interval 97-170; that stretch reads AGEFWLPDLM…RIEVVAIPGL (74 aa).

It belongs to the RimM family. In terms of assembly, binds ribosomal protein uS19.

It localises to the cytoplasm. Functionally, an accessory protein needed during the final step in the assembly of 30S ribosomal subunit, possibly for assembly of the head region. Essential for efficient processing of 16S rRNA. May be needed both before and after RbfA during the maturation of 16S rRNA. It has affinity for free ribosomal 30S subunits but not for 70S ribosomes. This chain is Ribosome maturation factor RimM, found in Gloeobacter violaceus (strain ATCC 29082 / PCC 7421).